Here is a 336-residue protein sequence, read N- to C-terminus: 3-isopropylmalate dehydrogenase (336 aa).

Residues Arg-87, Arg-97, Arg-121, and Asp-211 each contribute to the substrate site. Residues Asp-211, Asp-235, and Asp-239 each coordinate Mg(2+). 271–283 (GSAPDIAGQGIAD) lines the NAD(+) pocket.

This sequence belongs to the isocitrate and isopropylmalate dehydrogenases family. LeuB type 2 subfamily. In terms of assembly, homodimer. Mg(2+) is required as a cofactor. It depends on Mn(2+) as a cofactor.

Its subcellular location is the cytoplasm. It catalyses the reaction (2R,3S)-3-isopropylmalate + NAD(+) = 4-methyl-2-oxopentanoate + CO2 + NADH. It functions in the pathway amino-acid biosynthesis; L-leucine biosynthesis; L-leucine from 3-methyl-2-oxobutanoate: step 3/4. Catalyzes the oxidation of 3-carboxy-2-hydroxy-4-methylpentanoate (3-isopropylmalate) to 3-carboxy-4-methyl-2-oxopentanoate. The product decarboxylates to 4-methyl-2 oxopentanoate. The protein is 3-isopropylmalate dehydrogenase of Mycobacterium sp. (strain JLS).